The primary structure comprises 400 residues: Phosphoglycerate kinase (400 aa).

Residues 22–24 (DFN), R38, 61–64 (HLGR), R119, and R152 each bind substrate. ATP contacts are provided by residues K205, G296, E327, and 353-356 (GGDT).

This sequence belongs to the phosphoglycerate kinase family. As to quaternary structure, monomer.

The protein localises to the cytoplasm. It catalyses the reaction (2R)-3-phosphoglycerate + ATP = (2R)-3-phospho-glyceroyl phosphate + ADP. It functions in the pathway carbohydrate degradation; glycolysis; pyruvate from D-glyceraldehyde 3-phosphate: step 2/5. This chain is Phosphoglycerate kinase, found in Campylobacter jejuni subsp. jejuni serotype O:6 (strain 81116 / NCTC 11828).